A 302-amino-acid polypeptide reads, in one-letter code: Protoheme IX farnesyltransferase 1 (302 aa).

Transmembrane regions (helical) follow at residues 27–47 (VVAL…VTDF), 49–69 (WIQA…AAAF), 98–118 (SVAI…YAWV), 121–141 (LTAW…TMYL), 149–169 (IVIA…AVTG), 175–195 (AWLL…ALAI), 228–248 (LLTL…IYLF), and 281–301 (IYHL…GMVL).

Belongs to the UbiA prenyltransferase family. Protoheme IX farnesyltransferase subfamily.

It is found in the cell inner membrane. It catalyses the reaction heme b + (2E,6E)-farnesyl diphosphate + H2O = Fe(II)-heme o + diphosphate. The protein operates within porphyrin-containing compound metabolism; heme O biosynthesis; heme O from protoheme: step 1/1. Its function is as follows. Converts heme B (protoheme IX) to heme O by substitution of the vinyl group on carbon 2 of heme B porphyrin ring with a hydroxyethyl farnesyl side group. This is Protoheme IX farnesyltransferase 1 from Vibrio parahaemolyticus serotype O3:K6 (strain RIMD 2210633).